Here is a 539-residue protein sequence, read N- to C-terminus: Protein Wnt-4 (539 aa).

Residues 1-21 form the signal peptide; sequence MPSPTGVFVLMILTHLSFGLG. The disordered stretch occupies residues 34–77; the sequence is QNGDLDSSNPAIHHQQHQQHQQHQQHQQHQSNHNLNNGNMNSTI. Positions 51 to 74 are enriched in low complexity; sequence QQHQQHQQHQQHQSNHNLNNGNMN. N-linked (GlcNAc...) asparagine glycans are attached at residues asparagine 74 and asparagine 284. 5 cysteine pairs are disulfide-bonded: cysteine 274/cysteine 285, cysteine 322/cysteine 330, cysteine 332/cysteine 349, cysteine 397/cysteine 411, and cysteine 399/cysteine 406. Serine 403 carries O-palmitoleoyl serine; by PORCN lipidation. An N-linked (GlcNAc...) asparagine glycan is attached at asparagine 419. Positions 436-463 are disordered; sequence APNQRSMRQVSSSRMKKPKQRRKKPQQS. Positions 439-448 are enriched in low complexity; the sequence is QRSMRQVSSS. Residues 449-460 show a composition bias toward basic residues; it reads RMKKPKQRRKKP. Intrachain disulfides connect cysteine 478–cysteine 497, cysteine 486–cysteine 492, cysteine 496–cysteine 538, cysteine 512–cysteine 529, cysteine 514–cysteine 526, and cysteine 521–cysteine 522.

This sequence belongs to the Wnt family. Palmitoleoylated by porcupine. The lipid group functions as a sorting signal, targeting the ligand to polarized vesicles that transport Wnt4 to unique sites at the cell surface. Depalmitoleoylated by notum, leading to inhibit Wnt signaling pathway.

It is found in the secreted. The protein resides in the extracellular space. Its subcellular location is the extracellular matrix. Its function is as follows. Binds as a ligand to a family of frizzled seven-transmembrane receptors and acts through a cascade of genes on the nucleus. Acts downstream of homeotic complex genes in the visceral mesoderm and is required for embryonic segmentation. Also required for cell movement and FAK regulation during ovarian morphogenesis. This is Protein Wnt-4 (Wnt4) from Drosophila melanogaster (Fruit fly).